A 336-amino-acid polypeptide reads, in one-letter code: Probable deoxyhypusine synthase (336 aa).

The active-site Nucleophile is the K308.

This sequence belongs to the deoxyhypusine synthase family. NAD(+) is required as a cofactor.

It carries out the reaction [eIF5A protein]-L-lysine + spermidine = [eIF5A protein]-deoxyhypusine + propane-1,3-diamine. It participates in protein modification; eIF5A hypusination. In terms of biological role, catalyzes the NAD-dependent oxidative cleavage of spermidine and the subsequent transfer of the butylamine moiety of spermidine to the epsilon-amino group of a specific lysine residue of the eIF-5A precursor protein to form the intermediate deoxyhypusine residue. The sequence is that of Probable deoxyhypusine synthase from Pyrococcus furiosus (strain ATCC 43587 / DSM 3638 / JCM 8422 / Vc1).